The primary structure comprises 916 residues: Isoleucine--tRNA ligase (916 aa).

The short motif at 57–67 (PYANGNLHMGH) is the 'HIGH' region element. Glu-554 contacts L-isoleucyl-5'-AMP. The short motif at 595–599 (KMSKS) is the 'KMSKS' region element. Lys-598 serves as a coordination point for ATP. The Zn(2+) site is built by Cys-885, Cys-888, Cys-905, and Cys-908.

It belongs to the class-I aminoacyl-tRNA synthetase family. IleS type 1 subfamily. Monomer. Zn(2+) serves as cofactor.

It localises to the cytoplasm. The catalysed reaction is tRNA(Ile) + L-isoleucine + ATP = L-isoleucyl-tRNA(Ile) + AMP + diphosphate. Its function is as follows. Catalyzes the attachment of isoleucine to tRNA(Ile). As IleRS can inadvertently accommodate and process structurally similar amino acids such as valine, to avoid such errors it has two additional distinct tRNA(Ile)-dependent editing activities. One activity is designated as 'pretransfer' editing and involves the hydrolysis of activated Val-AMP. The other activity is designated 'posttransfer' editing and involves deacylation of mischarged Val-tRNA(Ile). In Staphylococcus epidermidis (strain ATCC 35984 / DSM 28319 / BCRC 17069 / CCUG 31568 / BM 3577 / RP62A), this protein is Isoleucine--tRNA ligase (ileS).